We begin with the raw amino-acid sequence, 164 residues long: MVDDSTRKTLSNIPLLQIRAGPREKDVWVQRLKEEYQALIKYVENNKQSGSDWFRLESNKEGTKWFGKCWYMHNLLKYEFEVEFDIPVTYPTTAPEIALPELDGKTAKMYRGGKICLTDHFKPLWARNVPKFGIAHAMALGLAPWLAVEIPDLIEKGIITYKEK.

Residue cysteine 116 is the Glycyl thioester intermediate of the active site.

It belongs to the ubiquitin-conjugating enzyme family. UFC1 subfamily.

Its function is as follows. E2-like enzyme which forms an intermediate with UFM1 via a thioester linkage. The protein is Ubiquitin-fold modifier-conjugating enzyme 1 of Drosophila sechellia (Fruit fly).